A 134-amino-acid polypeptide reads, in one-letter code: MSLKIRLARAGSKKRPYYHIVVADVRSPRDGRFIETVGAWNPMLAKDAERVKLDADRIQHWIAQGAQPTDRVLRFLDQAGLAKRPTRSNPTKGEPGKKAQERLAMAKQAEEEAAAKAAEAAAAAAAPAEEAASE.

Positions G80–E134 are disordered. Positions A115–E134 are enriched in low complexity.

The protein belongs to the bacterial ribosomal protein bS16 family.

The polypeptide is Small ribosomal subunit protein bS16 (Brucella anthropi (strain ATCC 49188 / DSM 6882 / CCUG 24695 / JCM 21032 / LMG 3331 / NBRC 15819 / NCTC 12168 / Alc 37) (Ochrobactrum anthropi)).